The sequence spans 85 residues: Large ribosomal subunit protein bL27 (85 aa).

The segment at Met1–Val23 is disordered.

The protein belongs to the bacterial ribosomal protein bL27 family.

The sequence is that of Large ribosomal subunit protein bL27 from Helicobacter hepaticus (strain ATCC 51449 / 3B1).